Consider the following 621-residue polypeptide: MNGATPGSAAAPAPVPDWRQFCELHAQVAAVDFAHKFCRFLRDNPTYDTPDAGTSFSRHFAANFLAVFSEEVRRVLGTAADTMEPEPAVTSVTSALKTATYGHSRSSEDVSAHVATKARVRKGFSLRNMSLCVVDGVRDLWHRRASPEPEGGATPKTTEPVSEPRDKWTRRLRLARTLAAKVELVDIQREGALRFMVADDAASGPGGTAQWQKCRLLLRRAVAGERFRLEFFVPPKASRPKVSIPLSAIIEVRTTMPLEMPEKDNTFVLKVENGAEYILETIDSLQKHSWVADIQGCVDPGDSEEDTGLSCARGGCLASRVTSCSCELLTEADMPRPPETMTAVGAVVTAPHGRARDTVGESLAHVPLETFLQTLESSGGVSESNNTGDEGAELDPDAEAELELSDYPWFHGTLSRVKAAQLVLAGGPRSHGLFVIRQSETRPGECVLTFNFQGKAKHLRLSLNGHGQCHVQHLWFQSVFDMLRHFHTHPIPLESGGSADITLRSYVRAQGPPPDPGPAPNTAAPVPACWTEPAGQHYFSSLATATCPPTSPSNGAGASSSSGSSSSATSVPPRPAEGPLSARSRSNSTEHLLEAASGATEEPADATLGRARAVENQYSFY.

The residue at position 47 (Tyr-47) is a Phosphotyrosine. The residue at position 130 (Ser-130) is a Phosphoserine. The segment at 144-165 is disordered; it reads RASPEPEGGATPKTTEPVSEPR. The PH domain occupies 186-299; sequence DIQREGALRF…WVADIQGCVD (114 aa). Residue Ser-303 is modified to Phosphoserine. The region spanning 409 to 507 is the SH2 domain; it reads WFHGTLSRVK…SADITLRSYV (99 aa). Disordered stretches follow at residues 507 to 528 and 548 to 609; these read VRAQ…PVPA and PPTS…ATLG. A compositionally biased stretch (low complexity) spans 552-570; the sequence is PSNGAGASSSSGSSSSATS. Ser-597 bears the Phosphoserine mark. Phosphotyrosine is present on Tyr-618.

This sequence belongs to the SH2B adapter family. As to quaternary structure, homodimer. Interacts with KIT/c-KIT, SHC1, EPOR, PDGFR, VAV1 and VAV3. Interacts (via N-terminal region) with SHC1. Interacts (via the phosphorylated C-terminus) with GRB2. Interacts (via its SH2 domain) with EPOR, INSR and KIT. Interacts with GRB2 after B-cell antigen receptor stimulation. Interacts (via PH domain) with VAV3. Interacts with NTRK1, NTRK2 and NTRK3 (phosphorylated); after stimulation of the receptor by its extracellular ligand and subsequent autophosphorylation of the receptor. Binds INSR, GRB2, ASB6 and CAP. Insulin stimulation leads to dissociation of CAP. Binds CBS only when SH2B2/APS has become phosphorylated. INSR binding does not depend on the phosphorylation of SH2B2/APS. Phosphorylated on a tyrosine residue by NTRK1, NTRK2, NTRK3 and INSR after stimulation of the receptor by its extracellular ligand. Tyrosine phosphorylated by JAK2, KIT and other kinases activated by B-cell receptor in response to stimulation with cytokines, IL3, IL5, PDGF, IGF1, IGF2, CSF2/GM-CSF and cross-linking of the B-cell receptor complex. As to expression, detected in embryonic brain, spinal cord and cortical neurons.

It localises to the cytoplasm. It is found in the membrane. Its function is as follows. Adapter protein for several members of the tyrosine kinase receptor family. Involved in multiple signaling pathways. Binds to EPOR and suppresses EPO-induced STAT5 activation, possibly through a masking effect on STAT5 docking sites in EPOR. Suppresses PDGF-induced mitogenesis. Involved in stimulation of glucose uptake by insulin. Involved in coupling from immunoreceptor to Ras signaling. Acts as a negative regulator of cytokine signaling in collaboration with CBL. Induces cytoskeletal reorganization and neurite outgrowth in cultured neurons. The polypeptide is SH2B adapter protein 2 (Sh2b2) (Rattus norvegicus (Rat)).